A 286-amino-acid polypeptide reads, in one-letter code: Bifunctional protein FolD 2 (286 aa).

NADP(+) contacts are provided by residues 165 to 167, Thr192, and Ile233; that span reads GRG.

It belongs to the tetrahydrofolate dehydrogenase/cyclohydrolase family. Homodimer.

It carries out the reaction (6R)-5,10-methylene-5,6,7,8-tetrahydrofolate + NADP(+) = (6R)-5,10-methenyltetrahydrofolate + NADPH. It catalyses the reaction (6R)-5,10-methenyltetrahydrofolate + H2O = (6R)-10-formyltetrahydrofolate + H(+). The protein operates within one-carbon metabolism; tetrahydrofolate interconversion. Functionally, catalyzes the oxidation of 5,10-methylenetetrahydrofolate to 5,10-methenyltetrahydrofolate and then the hydrolysis of 5,10-methenyltetrahydrofolate to 10-formyltetrahydrofolate. The chain is Bifunctional protein FolD 2 from Salinispora tropica (strain ATCC BAA-916 / DSM 44818 / JCM 13857 / NBRC 105044 / CNB-440).